Reading from the N-terminus, the 132-residue chain is MGNDTIANMITSIRNANLEKTKTVQVPATNITKNIGKILLQEGFIENFREHEESKNCFLIFTLKYQGKKKKPYITTLRRISKPGLRIYSNHKEIPKVLGGMGIVILSTSEGIMTDREAREKKIGGEILCYVW.

The protein belongs to the universal ribosomal protein uS8 family. As to quaternary structure, part of the 30S ribosomal subunit.

It localises to the plastid. Its subcellular location is the chloroplast. One of the primary rRNA binding proteins, it binds directly to 16S rRNA central domain where it helps coordinate assembly of the platform of the 30S subunit. This is Small ribosomal subunit protein uS8c (rps8) from Physcomitrium patens (Spreading-leaved earth moss).